Consider the following 153-residue polypeptide: Small ribosomal subunit protein bS16 (153 aa).

Residues 121–131 (AEAAAKAKAEA) are compositionally biased toward basic and acidic residues. A disordered region spans residues 121–153 (AEAAAKAKAEAEAAAAAEEAPAEEAAEEAPAED). A compositionally biased stretch (acidic residues) spans 140 to 153 (APAEEAAEEAPAED).

The protein belongs to the bacterial ribosomal protein bS16 family.

This is Small ribosomal subunit protein bS16 from Bifidobacterium longum (strain DJO10A).